The primary structure comprises 338 residues: Nicotinate-nucleotide--dimethylbenzimidazole phosphoribosyltransferase (338 aa).

Glu305 acts as the Proton acceptor in catalysis.

This sequence belongs to the CobT family. As to quaternary structure, homodimer.

The catalysed reaction is 5,6-dimethylbenzimidazole + nicotinate beta-D-ribonucleotide = alpha-ribazole 5'-phosphate + nicotinate + H(+). It functions in the pathway nucleoside biosynthesis; alpha-ribazole biosynthesis; alpha-ribazole from 5,6-dimethylbenzimidazole: step 1/2. Catalyzes the synthesis of alpha-ribazole-5'-phosphate from nicotinate mononucleotide (NAMN) and 5,6-dimethylbenzimidazole (DMB). In Sinorhizobium sp, this protein is Nicotinate-nucleotide--dimethylbenzimidazole phosphoribosyltransferase (cobU).